Here is a 501-residue protein sequence, read N- to C-terminus: tRNA (guanine(37)-N(1))-methyltransferase (501 aa).

S-adenosyl-L-methionine contacts are provided by residues His-282, 320-321 (DL), 348-349 (DG), and Asn-380. The tract at residues 474-501 (LQNDQEPPLKRQKTGDPFSGEPQIASDS) is disordered.

This sequence belongs to the class I-like SAM-binding methyltransferase superfamily. TRM5/TYW2 family. As to quaternary structure, monomer.

The protein resides in the mitochondrion matrix. It is found in the nucleus. It localises to the cytoplasm. The enzyme catalyses guanosine(37) in tRNA + S-adenosyl-L-methionine = N(1)-methylguanosine(37) in tRNA + S-adenosyl-L-homocysteine + H(+). Its function is as follows. Involved in mitochondrial tRNA methylation. Specifically methylates the N1 position of guanosine-37 in various tRNAs. Methylation is not dependent on the nature of the nucleoside 5' of the target nucleoside. This is the first step in the biosynthesis of wybutosine (yW), a modified base adjacent to the anticodon of tRNAs and required for accurate decoding. The protein is tRNA (guanine(37)-N(1))-methyltransferase (Trmt5) of Mus musculus (Mouse).